A 98-amino-acid chain; its full sequence is N(2)-fixation sustaining protein CowN (98 aa).

The protein belongs to the CowN family.

Is required to sustain N(2)-dependent growth in the presence of low levels of carbon monoxide (CO). Probably acts by protecting the N(2) fixation ability of the nitrogenase complex, which is inactivated in the presence of CO. The polypeptide is N(2)-fixation sustaining protein CowN (Azospirillum sp. (strain B510)).